A 411-amino-acid polypeptide reads, in one-letter code: Coiled-coil domain-containing protein 159 (411 aa).

The interval glutamate 84 to valine 113 is disordered. Residues alanine 91 to proline 102 show a composition bias toward basic and acidic residues. Positions glutamate 269 to threonine 305 form a coiled coil. The tract at residues arginine 372–alanine 411 is disordered. The span at cysteine 384 to aspartate 393 shows a compositional bias: polar residues.

In terms of assembly, interacts with DYNLT2. Interacts with GGNBP1. Interacts with OSBP2. Expressed in spermatids but undetectable in the spermatozoon (at protein level). Highly expressed in the testis (at protein level).

Its function is as follows. Functions during spermatid development; may participate in the centrosome reduction procedure of spermatids and is required for the formation of the connecting piece/sperm head-tail coupling apparatus (HTCA) and the correct and tight attachment of the flagellum to the nuclear envelope. In Mus musculus (Mouse), this protein is Coiled-coil domain-containing protein 159 (Ccdc159).